The chain runs to 402 residues: Putative F-box protein At4g22180 (402 aa).

Positions 18-64 (PNSWSELPLDLLTAVFERLSYANFQRAKSVCSSWHSGSRQSVPIQIP) constitute an F-box domain.

The chain is Putative F-box protein At4g22180 from Arabidopsis thaliana (Mouse-ear cress).